Reading from the N-terminus, the 819-residue chain is DNA replication licensing factor Mcm3 (819 aa).

An MCM domain is found at Ile290 to Val496. Gln348, Leu388, Glu389, Ala390, and Ala392 together coordinate ADP. Positions Ser472–Asp475 match the Arginine finger motif. Ser522 carries the phosphoserine modification. Tyr538 carries the phosphotyrosine modification. Positions Asp655–Thr717 are disordered. Phosphoserine is present on residues Ser664, Ser666, Ser680, and Ser682. Residues Thr690 and Thr692 each carry the phosphothreonine modification. 3 positions are modified to phosphoserine: Ser697, Ser735, and Ser739.

This sequence belongs to the MCM family. As to quaternary structure, component of the Mcm2-7 complex. The complex forms a toroidal hexameric ring with the proposed subunit order Mcm2-Mcm6-Mcm4-Mcm7-Mcm3-Mcm5.

Its subcellular location is the nucleus. The protein localises to the chromosome. It carries out the reaction ATP + H2O = ADP + phosphate + H(+). Functionally, acts as a component of the Mcm2-7 complex (Mcm complex) (Mcm complex) which is the putative replicative helicase essential for 'once per cell cycle' DNA replication initiation and elongation in eukaryotic cells. Core component of CDC45-MCM-GINS (CMG) helicase, the molecular machine that unwinds template DNA during replication, and around which the replisome is built. The active ATPase sites in the Mcm2-7 ring are formed through the interaction surfaces of two neighboring subunits such that a critical structure of a conserved arginine finger motif is provided in trans relative to the ATP-binding site of the Walker A box of the adjacent subunit. The six ATPase active sites, however, are likely to contribute differentially to the complex helicase activity. The polypeptide is DNA replication licensing factor Mcm3 (Mcm3) (Drosophila melanogaster (Fruit fly)).